We begin with the raw amino-acid sequence, 230 residues long: Uracil-DNA glycosylase (230 aa).

D70 (proton acceptor) is an active-site residue.

This sequence belongs to the uracil-DNA glycosylase (UDG) superfamily. UNG family.

The protein resides in the cytoplasm. The catalysed reaction is Hydrolyzes single-stranded DNA or mismatched double-stranded DNA and polynucleotides, releasing free uracil.. Functionally, excises uracil residues from the DNA which can arise as a result of misincorporation of dUMP residues by DNA polymerase or due to deamination of cytosine. In Pseudomonas fluorescens (strain SBW25), this protein is Uracil-DNA glycosylase.